A 293-amino-acid polypeptide reads, in one-letter code: Pyridoxal 5'-phosphate synthase subunit PdxS (293 aa).

D-ribose 5-phosphate is bound at residue D23. K80 acts as the Schiff-base intermediate with D-ribose 5-phosphate in catalysis. Residue G152 participates in D-ribose 5-phosphate binding. Position 164 (R164) interacts with D-glyceraldehyde 3-phosphate. D-ribose 5-phosphate contacts are provided by residues G213 and 234–235 (GS).

Belongs to the PdxS/SNZ family. As to quaternary structure, in the presence of PdxT, forms a dodecamer of heterodimers.

The catalysed reaction is aldehydo-D-ribose 5-phosphate + D-glyceraldehyde 3-phosphate + L-glutamine = pyridoxal 5'-phosphate + L-glutamate + phosphate + 3 H2O + H(+). Its pathway is cofactor biosynthesis; pyridoxal 5'-phosphate biosynthesis. Functionally, catalyzes the formation of pyridoxal 5'-phosphate from ribose 5-phosphate (RBP), glyceraldehyde 3-phosphate (G3P) and ammonia. The ammonia is provided by the PdxT subunit. Can also use ribulose 5-phosphate and dihydroxyacetone phosphate as substrates, resulting from enzyme-catalyzed isomerization of RBP and G3P, respectively. The sequence is that of Pyridoxal 5'-phosphate synthase subunit PdxS from Roseiflexus sp. (strain RS-1).